A 74-amino-acid polypeptide reads, in one-letter code: NAD(P)H-quinone oxidoreductase subunit L (74 aa).

A run of 2 helical transmembrane segments spans residues 5–25 (LIIAALYLALAGAYLLVVPAA) and 43–63 (AFMYFLVFFFFPGLLLLAPLL).

The protein belongs to the complex I NdhL subunit family. As to quaternary structure, NDH-1 can be composed of about 15 different subunits; different subcomplexes with different compositions have been identified which probably have different functions.

It is found in the cellular thylakoid membrane. It carries out the reaction a plastoquinone + NADH + (n+1) H(+)(in) = a plastoquinol + NAD(+) + n H(+)(out). The enzyme catalyses a plastoquinone + NADPH + (n+1) H(+)(in) = a plastoquinol + NADP(+) + n H(+)(out). NDH-1 shuttles electrons from an unknown electron donor, via FMN and iron-sulfur (Fe-S) centers, to quinones in the respiratory and/or the photosynthetic chain. The immediate electron acceptor for the enzyme in this species is believed to be plastoquinone. Couples the redox reaction to proton translocation, and thus conserves the redox energy in a proton gradient. Cyanobacterial NDH-1 also plays a role in inorganic carbon-concentration. This Synechococcus elongatus (strain ATCC 33912 / PCC 7942 / FACHB-805) (Anacystis nidulans R2) protein is NAD(P)H-quinone oxidoreductase subunit L.